A 166-amino-acid polypeptide reads, in one-letter code: uncharacterized protein (166 aa).

Pentapeptide repeat domains follow at residues 38 to 77, 78 to 117, and 118 to 157; these read GECL…NLRR, ALLD…NLER, and SFLR…EFWE.

This is an uncharacterized protein from Synechocystis sp. (strain ATCC 27184 / PCC 6803 / Kazusa).